The chain runs to 53 residues: UPF0391 membrane protein BPSS2216 (53 aa).

Helical transmembrane passes span 5–25 and 30–50; these read ALVF…GIAA and IAKI…VLGV.

Belongs to the UPF0391 family.

The protein localises to the cell membrane. This is UPF0391 membrane protein BPSS2216 from Burkholderia pseudomallei (strain K96243).